A 271-amino-acid polypeptide reads, in one-letter code: Nus factor SuhB (271 aa).

Mg(2+) is bound by residues E67, D86, and L88. Residue E67 coordinates substrate. Substrate-binding positions include 88–91 (LDGT), R187, and D216.

It belongs to the inositol monophosphatase superfamily. As to quaternary structure, homodimer. The rRNA transcription and antitermination complex (rrnTAC) consists of RNA polymerase (RNAP), NusA, NusB, NusE (rpsJ), NusG, SubB, ribosomal protein S4, DNA and precursor rRNA; S4 is more flexible than other subunits. Interacts with the ribosome and with RNA polymerase. Requires Mg(2+) as cofactor.

Its subcellular location is the cytoplasm. It carries out the reaction a myo-inositol phosphate + H2O = myo-inositol + phosphate. In terms of biological role, part of the processive rRNA transcription and antitermination complex (rrnTAC). The complex forms an RNA-chaperone ring around the RNA exit tunnel of RNA polymerase (RNAP). It supports rapid transcription and antitermination of rRNA operons, cotranscriptional rRNA folding, and annealing of distal rRNA regions to allow correct ribosome biogenesis. This subunit may play a central role in organizing the structure. Its function is as follows. A ribosome-associated protein, deletion of which alters the expression of 494 genes, suggesting a role in global gene regulation. Involved in control of pathogenesis-related genes. Required for the activation of virulence factors associated with acute infections (type 3 secretion system, T3SS) while suppressing virulence factors associated with chronic infections (biofilm formation and type 6 secretion system, T6SS). It probably acts at a post-transcriptional level. The protein is Nus factor SuhB of Pseudomonas aeruginosa (strain ATCC 15692 / DSM 22644 / CIP 104116 / JCM 14847 / LMG 12228 / 1C / PRS 101 / PAO1).